Here is a 178-residue protein sequence, read N- to C-terminus: Large ribosomal subunit protein uL6 (178 aa).

This sequence belongs to the universal ribosomal protein uL6 family. Part of the 50S ribosomal subunit.

Functionally, this protein binds to the 23S rRNA, and is important in its secondary structure. It is located near the subunit interface in the base of the L7/L12 stalk, and near the tRNA binding site of the peptidyltransferase center. This is Large ribosomal subunit protein uL6 from Enterococcus faecalis (strain ATCC 700802 / V583).